A 194-amino-acid polypeptide reads, in one-letter code: WASH complex subunit 3 (194 aa).

N-acetylmethionine is present on Met1. Residues 46–74 adopt a coiled-coil conformation; it reads TVCEEKLADLSLRIQQIETTLNILDAKLS. Positions 98 to 123 are enriched in polar residues; sequence THSEATSEQSQQNSLQDSGPQESEVT. 2 disordered regions span residues 98–125 and 158–194; these read THSE…VTPE and SEGL…SFSD.

This sequence belongs to the CCDC53 family. Component of the WASH core complex also described as WASH regulatory complex (SHRC) composed of WASHC1, WASHC2, WASHC3, WASHC4 and WASHC5. The WASH core complex associates via WASHC2 with the F-actin-capping protein dimer (formed by CAPZA1, CAPZA2 or CAPZA3 and CAPZB) in a transient or substoichiometric manner which was initially described as WASH complex.

The protein localises to the early endosome. In terms of biological role, acts as a component of the WASH core complex that functions as a nucleation-promoting factor (NPF) at the surface of endosomes, where it recruits and activates the Arp2/3 complex to induce actin polymerization, playing a key role in the fission of tubules that serve as transport intermediates during endosome sorting. This Bos taurus (Bovine) protein is WASH complex subunit 3.